The following is a 462-amino-acid chain: MDKKQLLRNLPKIDELLKEEIVNRYLQENSRTLVVDSLRQSIDHYRGEILKNNIDSFTKENVVNYFIDTLEENKSTKFKKVINATGVVIHTNLGRSLLAKEAIENVVKISENYSNLEYDLKEGKRGSRYSHVEELIKKVTGAEAAMVVNNNAAAVMLALNTLCEEREAIVSRGQLVEIGGSFRVPDVMKFSRAHLVEVGTTNRTHLYDYENNINENTGVLLKVHTSNFKIMGFTEEVSSEEMVQLGGKYKLPVMEDIGSGTLVDFSKYGFTYEPTVQSSLEKGVDVVTFSGDKMLGGPQAGIIVGKKKYIDKMKKNQLTRALRIDKMTLAALEGTLKCYIDEKEAIENIPTLNMILSSKDIHKKRAQRLKRRLQNNVKDFNFKVSEDLSMVGGGSMPGERIPTYVVKVNSDKITAEKIEEKLRLSKNPIIVRVSKDEVILDVRTLFERDFNIIVEEFKKLLK.

An N6-(pyridoxal phosphate)lysine modification is found at lysine 293.

Belongs to the SelA family. Pyridoxal 5'-phosphate is required as a cofactor.

The protein resides in the cytoplasm. The enzyme catalyses L-seryl-tRNA(Sec) + selenophosphate + H(+) = L-selenocysteinyl-tRNA(Sec) + phosphate. Its pathway is aminoacyl-tRNA biosynthesis; selenocysteinyl-tRNA(Sec) biosynthesis; selenocysteinyl-tRNA(Sec) from L-seryl-tRNA(Sec) (bacterial route): step 1/1. Its function is as follows. Converts seryl-tRNA(Sec) to selenocysteinyl-tRNA(Sec) required for selenoprotein biosynthesis. The sequence is that of L-seryl-tRNA(Sec) selenium transferase from Clostridium botulinum (strain Langeland / NCTC 10281 / Type F).